Here is a 165-residue protein sequence, read N- to C-terminus: Transcriptional repressor NrdR (165 aa).

A zinc finger lies at 3–34 (CPFCRHPDSRVVDSREADEGQAIRRRRSCPEC). One can recognise an ATP-cone domain in the interval 46-136 (LSVVKRSGVT…VYKSFSSAAD (91 aa)).

Belongs to the NrdR family. Zn(2+) is required as a cofactor.

Its function is as follows. Negatively regulates transcription of bacterial ribonucleotide reductase nrd genes and operons by binding to NrdR-boxes. This is Transcriptional repressor NrdR from Rhodococcus erythropolis (strain PR4 / NBRC 100887).